A 229-amino-acid chain; its full sequence is Octanoyltransferase (229 aa).

In terms of domain architecture, BPL/LPL catalytic spans 30–223; that stretch reads PDTPDTIWLV…QLQQRAQAHP (194 aa). Substrate is bound by residues 69–76, 141–143, and 154–156; these read RGGQITYH, ALG, and GVS. C172 (acyl-thioester intermediate) is an active-site residue.

Belongs to the LipB family.

The protein localises to the cytoplasm. It carries out the reaction octanoyl-[ACP] + L-lysyl-[protein] = N(6)-octanoyl-L-lysyl-[protein] + holo-[ACP] + H(+). It participates in protein modification; protein lipoylation via endogenous pathway; protein N(6)-(lipoyl)lysine from octanoyl-[acyl-carrier-protein]: step 1/2. Catalyzes the transfer of endogenously produced octanoic acid from octanoyl-acyl-carrier-protein onto the lipoyl domains of lipoate-dependent enzymes. Lipoyl-ACP can also act as a substrate although octanoyl-ACP is likely to be the physiological substrate. The sequence is that of Octanoyltransferase from Ralstonia pickettii (strain 12J).